The primary structure comprises 715 residues: Protein DENND6 homolog (715 aa).

Positions 13 to 58 (MIFKEEEIKKQQILLEKEEKEKQEQQQKKLNKDNIFKLEEEGKKLE) form a coiled coil. The uDENN domain occupies 96–273 (NSFCIINFDL…VKQHQLGGGS (178 aa)). Disordered regions lie at residues 269 to 296 (LGGG…SNTT) and 392 to 416 (SGTR…NNNN). Residues 299-476 (SPSIWSEMKL…KDLLTRHVLD (178 aa)) form the cDENN domain. Over residues 399 to 416 (SNNNNNQDDSEYNNNNNN) the composition is skewed to low complexity. Positions 478–600 (KEKILSEYKP…KQWLDDKRAQ (123 aa)) constitute a dDENN domain.

This sequence belongs to the DENND6 family.

This is Protein DENND6 homolog from Dictyostelium discoideum (Social amoeba).